We begin with the raw amino-acid sequence, 145 residues long: Large ribosomal subunit protein uL11 (145 aa).

It belongs to the universal ribosomal protein uL11 family. As to quaternary structure, part of the ribosomal stalk of the 50S ribosomal subunit. Interacts with L10 and the large rRNA to form the base of the stalk. L10 forms an elongated spine to which L12 dimers bind in a sequential fashion forming a multimeric L10(L12)X complex. Post-translationally, one or more lysine residues are methylated.

In terms of biological role, forms part of the ribosomal stalk which helps the ribosome interact with GTP-bound translation factors. The chain is Large ribosomal subunit protein uL11 from Aquifex aeolicus (strain VF5).